Consider the following 517-residue polypeptide: Methionine aminopeptidase 1b (517 aa).

Residues Tyr-74 to Leu-94 are disordered. Over residues Asn-79–Leu-94 the composition is skewed to low complexity. Residues Glu-114 to Asn-166 form a C6H2-type zinc finger. The Zn(2+) site is built by Cys-117, Cys-120, Cys-130, Cys-133, Cys-143, Cys-147, His-155, and His-159. His-325 provides a ligand contact to a protein. Residues Asp-342, Asp-353, and His-419 each contribute to the Zn(2+) site. A protein is bound at residue His-426. 2 residues coordinate Zn(2+): Glu-452 and Glu-483.

The protein belongs to the peptidase M24A family. Methionine aminopeptidase type 1 subfamily. Associates with the 60S ribosomal subunit of the 80S translational complex. It depends on Zn(2+) as a cofactor. Requires Co(2+) as cofactor. The cofactor is Mn(2+). Fe(2+) serves as cofactor.

The protein localises to the cytoplasm. The catalysed reaction is Release of N-terminal amino acids, preferentially methionine, from peptides and arylamides.. Its activity is regulated as follows. Inhibited by pyrimidine derivative XC11. Cotranslationally removes the N-terminal methionine from nascent proteins. The N-terminal methionine is often cleaved when the second residue in the primary sequence is small and uncharged (Met-Ala-, Cys, Gly, Pro, Ser, Thr, or Val). May play an important role in parasite growth during the blood asexual stage. The polypeptide is Methionine aminopeptidase 1b (Plasmodium falciparum (isolate 3D7)).